The primary structure comprises 489 residues: ATP-dependent zinc metalloprotease FtsH 3 (489 aa).

The Cytoplasmic segment spans residues 1-14 (MNPRPVRPGGSLQQ). The helical transmembrane segment at 15 to 31 (SLLALGSLSVAVGLAVW) threads the bilayer. The Extracellular portion of the chain corresponds to 32–489 (QQRTLGRGRS…GPRPARPAMN (458 aa)). Residue 95–102 (GPPGTGKT) coordinates ATP. Zn(2+) is bound at residue His315. Glu316 is a catalytic residue. Zn(2+) contacts are provided by His319 and Asp391.

This sequence in the central section; belongs to the AAA ATPase family. The protein in the C-terminal section; belongs to the peptidase M41 family. As to quaternary structure, homohexamer. It depends on Zn(2+) as a cofactor.

Its subcellular location is the cell membrane. Acts as a processive, ATP-dependent zinc metallopeptidase for both cytoplasmic and membrane proteins. Plays a role in the quality control of integral membrane proteins. The chain is ATP-dependent zinc metalloprotease FtsH 3 from Sphaerobacter thermophilus (strain ATCC 49802 / DSM 20745 / KCCM 41009 / NCIMB 13125 / S 6022).